Reading from the N-terminus, the 520-residue chain is 6-phosphofructo-2-kinase/fructose-2,6-bisphosphatase 3 (520 aa).

Residues 1 to 245 form a 6-phosphofructo-2-kinase region; it reads MPLELTQSRV…VYYLMNIHVQ (245 aa). 42-50 provides a ligand contact to ATP; it reads GLPARGKTY. Beta-D-fructose 6-phosphate contacts are provided by Arg75 and Arg99. Asp125 is a catalytic residue. Positions 127 and 133 each coordinate beta-D-fructose 6-phosphate. Residue Cys155 is part of the active site. 164-169 is a binding site for ATP; sequence NIMEVK. Beta-D-fructose 6-phosphate contacts are provided by Lys169, Arg190, and Tyr194. The interval 246 to 520 is fructose-2,6-bisphosphatase; it reads PRTIYLCRHG…RSSADSSRKH (275 aa). Residue Arg253 participates in beta-D-fructose 2,6-bisphosphate binding. His254 functions as the Tele-phosphohistidine intermediate in the catalytic mechanism. The beta-D-fructose 2,6-bisphosphate site is built by Asn260 and Gly266. The active-site Proton donor/acceptor is Glu323. Residues Tyr334, Arg348, Lys352, Tyr363, Gln389, and Arg393 each contribute to the beta-D-fructose 2,6-bisphosphate site. 345 to 348 contacts ATP; it reads YALR. ATP is bound by residues 389–393 and Tyr425; that span reads QAVLR. The segment at 443-520 is disordered; the sequence is RERSEDAKKG…RSSADSSRKH (78 aa). Ser461 carries the phosphoserine; by AMPK modification. Thr463 bears the Phosphothreonine mark. The residue at position 467 (Ser467) is a Phosphoserine. Thr471 carries the post-translational modification Phosphothreonine; by PKC. Residues 502–520 show a composition bias toward polar residues; sequence LPGQNMKGSRSSADSSRKH.

This sequence in the C-terminal section; belongs to the phosphoglycerate mutase family. In terms of assembly, homodimer. Forms a heterodimer with PFKFB2. Post-translationally, phosphorylation by AMPK stimulates activity. Ubiquitous.

It carries out the reaction beta-D-fructose 2,6-bisphosphate + H2O = beta-D-fructose 6-phosphate + phosphate. The enzyme catalyses beta-D-fructose 6-phosphate + ATP = beta-D-fructose 2,6-bisphosphate + ADP + H(+). In terms of biological role, catalyzes both the synthesis and degradation of fructose 2,6-bisphosphate. In Homo sapiens (Human), this protein is 6-phosphofructo-2-kinase/fructose-2,6-bisphosphatase 3 (PFKFB3).